The following is a 44-amino-acid chain: Conotoxin Sr5.5 (44 aa).

An N-terminal signal peptide occupies residues 1-19; sequence MRCLPVFVILLLLIASAPS. The propeptide occupies 20 to 29; sequence VDDNAKGTQH.

It belongs to the conotoxin T superfamily. Contains 2 disulfide bonds that can be either 'C1-C3, C2-C4' or 'C1-C4, C2-C3', since these disulfide connectivities have been observed for conotoxins with cysteine framework V (for examples, see AC P0DQQ7 and AC P81755). In terms of tissue distribution, expressed by the venom duct.

The protein resides in the secreted. The sequence is that of Conotoxin Sr5.5 from Conus spurius (Alphabet cone).